The chain runs to 315 residues: MSTNRRFDPNFTPYVVNSMGPKTPERARVVLGALIRHIHDFAREVELTSAEWMLGVEFINSIGKISTPIRNECHRICDVIGLESLVDEIANKIVTEDGVSPTSNVILGPFWSPNAPFRELGDSIIQDPNPNGKVTYMHGVLKDMETGAPIVGAVLDIWQASANGQYDFQDPNQSENNLRGKFRSNEKGEFNWYCYHPTPYSLPTDGPAGVLLNLMDRSPMRPAHIHLMITHPDYATVINQIYPSDDPHLDIDSVFAVKDDLVVDFKPKTDDPKAQLDLEYNVTMALKKHHPNPNSAPPVSSFERFNKASKTQEKL.

Residues Tyr166, Tyr200, His224, and His226 each coordinate Fe cation. The disordered stretch occupies residues 287–315 (KKHHPNPNSAPPVSSFERFNKASKTQEKL). Positions 304 to 315 (RFNKASKTQEKL) are enriched in basic and acidic residues.

The protein belongs to the intradiol ring-cleavage dioxygenase family. As to quaternary structure, homodimer. It depends on Fe(3+) as a cofactor.

The enzyme catalyses 3,4-dihydroxybenzoate + O2 = 3-carboxy-cis,cis-muconate + 2 H(+). Functionally, intradiol ring-cleavage dioxygenase; part of the benzoic acid degradation pathway also known as the protocatechuic acid pathway. Benzoic acid debradation begins with the conversion of benzoic acid into 4-hydroxybenzoic acid through hydroxylation by the benzoate-4-monooxygenase bphA, and its partner NADPH-cytochrome P450 reductase cprA which act as a mediator in electron donation from NADPH. 4-Hydroxybenzoic acid is then converted into 3,4-dihydroxybenzoic acid (also called protocatechuic acid) by the p-hydroxybenzoate-m-hydroxylase phhA. Protocatechuic acid is converted into 3-carboxy-cis,cis-muconic acid by the intradiol ring-cleavage dioxygenase prcA, which is further metabolized through the 3-oxoadipate pathway to finally enter the tricarboxylic acid cycle (TCA). This Aspergillus niger (strain ATCC MYA-4892 / CBS 513.88 / FGSC A1513) protein is Intradiol ring-cleavage dioxygenase prcA.